The primary structure comprises 246 residues: Small ribosomal subunit protein uS2 (246 aa).

It belongs to the universal ribosomal protein uS2 family.

The sequence is that of Small ribosomal subunit protein uS2 from Azotobacter vinelandii (strain DJ / ATCC BAA-1303).